The primary structure comprises 223 residues: Urease accessory protein UreF (223 aa).

It belongs to the UreF family. In terms of assembly, ureD, UreF and UreG form a complex that acts as a GTP-hydrolysis-dependent molecular chaperone, activating the urease apoprotein by helping to assemble the nickel containing metallocenter of UreC. The UreE protein probably delivers the nickel.

It is found in the cytoplasm. Its function is as follows. Required for maturation of urease via the functional incorporation of the urease nickel metallocenter. The sequence is that of Urease accessory protein UreF from Rhizobium johnstonii (strain DSM 114642 / LMG 32736 / 3841) (Rhizobium leguminosarum bv. viciae).